The chain runs to 406 residues: Proteasome-activating nucleotidase 1 (406 aa).

Residues 13 to 72 (YDKDSASQQEKITALQERLEVLETQNEEMRDKLLDTNAENNKYQQKLERLTHENKKLKQS) are a coiled coil. Residues 194–199 (GTGKTM) and His-333 contribute to the ATP site. Residues 404–406 (AFA) are docks into pockets in the proteasome alpha-ring to cause gate opening.

The protein belongs to the AAA ATPase family. As to quaternary structure, homododecamer, in a proposed two stacked hexameric ring configuration, but may also form homohexamer. The hexameric complex has likely a two-ring architecture resembling a top hat that caps the 20S proteasome core at one or both ends. Upon ATP-binding, the C-terminus of PAN probably interacts with the alpha-rings of the proteasome core by binding to the intersubunit pockets. Interacts with SAMP1-MoaE conjugate in vitro, but does not bind to SAMP1 or MoaE alone. Interacts with NcsA.

It localises to the cytoplasm. ATPase activity is inhibited by EDTA in vitro. Its function is as follows. ATPase which is responsible for recognizing, binding, unfolding and translocation of substrate proteins into the archaeal 20S proteasome core particle. Is essential for opening the gate of the 20S proteasome via an interaction with its C-terminus, thereby allowing substrate entry and access to the site of proteolysis. Thus, the C-terminus of the proteasomal ATPase functions like a 'key in a lock' to induce gate opening and therefore regulate proteolysis. Unfolding activity requires energy from ATP hydrolysis, whereas ATP binding alone promotes ATPase-20S proteasome association which triggers gate opening, and supports translocation of unfolded substrates. Is also able to cleave other nucleoside triphosphates including GTP and TTP, but the rate of hydrolysis is 4- to 5-fold slower than for ATP. In Haloferax volcanii (strain ATCC 29605 / DSM 3757 / JCM 8879 / NBRC 14742 / NCIMB 2012 / VKM B-1768 / DS2) (Halobacterium volcanii), this protein is Proteasome-activating nucleotidase 1.